We begin with the raw amino-acid sequence, 473 residues long: MTERPLTPEAGEAIAAIATPVGVGALAIVRMSGRGVLEIADRVFRKKGGTAFSFKEAEGFSAHFGTLSDSRGMVDEVIALVFRAPSSFTMEDMVEFTCHGGPVVVRHLLQALLDSGCRLAEPGEFTRRAFLSGRIDLLQAEAIGEMIHARTESAFRTAVTQMQGNLSRHLQEMRAGLLQSCALLELELDFSEDDVEFQSRDALRLEVGRLQGEILRLVESYREGHLLTEGVAAVIAGRPNAGKSTLLNALLGHERAIVSHMPGTTRDYIEECFIHEKTMFRLTDTAGLRHSDEEVEHEGIRRSYRKISEADLMLYIIDSSEGDMQQEAAAARELRQRHPESRMIVVANKTDLAPDAGGMIAQLQSETACPVIAMAASKGDGLNELKSTMAGMVEGLDKLHEASVLVTSLRHYEALRNAADSLDNALQLITAREPAELIAFELRSALDYVGEITGKVVSQELLNTIFDQFCIGK.

Residues Arg30, Glu95, and Arg134 each contribute to the (6S)-5-formyl-5,6,7,8-tetrahydrofolate site. Residues 230–394 (GVAAVIAGRP…LKSTMAGMVE (165 aa)) enclose the TrmE-type G domain. GTP contacts are provided by residues 240 to 245 (NAGKST), 259 to 265 (SHMPGTT), and 284 to 287 (DTAG). Residues Ser244 and Thr265 each coordinate Mg(2+). Lys473 provides a ligand contact to (6S)-5-formyl-5,6,7,8-tetrahydrofolate.

The protein belongs to the TRAFAC class TrmE-Era-EngA-EngB-Septin-like GTPase superfamily. TrmE GTPase family. In terms of assembly, homodimer. Heterotetramer of two MnmE and two MnmG subunits. The cofactor is K(+).

Its subcellular location is the cytoplasm. In terms of biological role, exhibits a very high intrinsic GTPase hydrolysis rate. Involved in the addition of a carboxymethylaminomethyl (cmnm) group at the wobble position (U34) of certain tRNAs, forming tRNA-cmnm(5)s(2)U34. The chain is tRNA modification GTPase MnmE from Chlorobium phaeovibrioides (strain DSM 265 / 1930) (Prosthecochloris vibrioformis (strain DSM 265)).